The following is a 443-amino-acid chain: Tryptophan synthase beta chain (443 aa).

K110 carries the post-translational modification N6-(pyridoxal phosphate)lysine.

The protein belongs to the TrpB family. In terms of assembly, tetramer of two alpha and two beta chains. The cofactor is pyridoxal 5'-phosphate.

It catalyses the reaction (1S,2R)-1-C-(indol-3-yl)glycerol 3-phosphate + L-serine = D-glyceraldehyde 3-phosphate + L-tryptophan + H2O. It functions in the pathway amino-acid biosynthesis; L-tryptophan biosynthesis; L-tryptophan from chorismate: step 5/5. Functionally, the beta subunit is responsible for the synthesis of L-tryptophan from indole and L-serine. The polypeptide is Tryptophan synthase beta chain (Thermococcus onnurineus (strain NA1)).